Consider the following 458-residue polypeptide: UDP-N-acetylmuramate--L-alanine ligase (458 aa).

119–125 (GTHGKTT) contributes to the ATP binding site.

The protein belongs to the MurCDEF family.

It is found in the cytoplasm. The enzyme catalyses UDP-N-acetyl-alpha-D-muramate + L-alanine + ATP = UDP-N-acetyl-alpha-D-muramoyl-L-alanine + ADP + phosphate + H(+). The protein operates within cell wall biogenesis; peptidoglycan biosynthesis. Functionally, cell wall formation. This Phocaeicola vulgatus (strain ATCC 8482 / DSM 1447 / JCM 5826 / CCUG 4940 / NBRC 14291 / NCTC 11154) (Bacteroides vulgatus) protein is UDP-N-acetylmuramate--L-alanine ligase.